The sequence spans 471 residues: UDP-N-acetylmuramate--L-alanine ligase (471 aa).

114–120 (GTHGKTT) provides a ligand contact to ATP.

The protein belongs to the MurCDEF family.

The protein localises to the cytoplasm. It catalyses the reaction UDP-N-acetyl-alpha-D-muramate + L-alanine + ATP = UDP-N-acetyl-alpha-D-muramoyl-L-alanine + ADP + phosphate + H(+). It participates in cell wall biogenesis; peptidoglycan biosynthesis. Its function is as follows. Cell wall formation. The protein is UDP-N-acetylmuramate--L-alanine ligase of Allorhizobium ampelinum (strain ATCC BAA-846 / DSM 112012 / S4) (Agrobacterium vitis (strain S4)).